A 321-amino-acid polypeptide reads, in one-letter code: Tetraketide alpha-pyrone reductase 2 (321 aa).

Ser-2 is modified (N-acetylserine). NADP(+) is bound by residues 4-28 (YLVTGGTGFIASYIIKSLLELGHTV), Lys-40, and Tyr-160.

This sequence belongs to the NAD(P)-dependent epimerase/dehydratase family. Dihydroflavonol-4-reductase subfamily.

It localises to the cytoplasm. May be involved in the biosynthesis of hydroxylated tetraketide compounds that serve as sporopollenin precursors (the main constituents of exine). Acts on tetraketide alpha-pyrones and reduces the carbonyl function on the tetraketide alkyl chain to a secondary alcohol function. The polypeptide is Tetraketide alpha-pyrone reductase 2 (TKPR2) (Arabidopsis thaliana (Mouse-ear cress)).